The following is a 925-amino-acid chain: Alanine--tRNA ligase (925 aa).

Residues histidine 611, histidine 615, cysteine 714, and histidine 718 each contribute to the Zn(2+) site.

It belongs to the class-II aminoacyl-tRNA synthetase family. The cofactor is Zn(2+).

It is found in the cytoplasm. The catalysed reaction is tRNA(Ala) + L-alanine + ATP = L-alanyl-tRNA(Ala) + AMP + diphosphate. Catalyzes the attachment of alanine to tRNA(Ala) in a two-step reaction: alanine is first activated by ATP to form Ala-AMP and then transferred to the acceptor end of tRNA(Ala). Also edits incorrectly charged Ser-tRNA(Ala) and Gly-tRNA(Ala) via its editing domain. The protein is Alanine--tRNA ligase of Methanosarcina acetivorans (strain ATCC 35395 / DSM 2834 / JCM 12185 / C2A).